We begin with the raw amino-acid sequence, 275 residues long: Gibberellin-regulated protein 14 (275 aa).

The first 21 residues, 1–21 (MALSLLSVFIFFHVFTNVVFA), serve as a signal peptide directing secretion. The interval 34–207 (PTPTLPSPSP…TAPPVKPPTP (174 aa)) is disordered. Positions 36-207 (PTLPSPSPAT…TAPPVKPPTP (172 aa)) are enriched in pro residues.

It belongs to the GASA family. Six disulfide bonds may be present. Expressed in flower abscission zone, style, stamen filaments and lateral roots.

The protein localises to the secreted. Its function is as follows. Gibberellin-regulated protein that may function in hormonal controlled steps of development such as seed germination, flowering and seed maturation. The chain is Gibberellin-regulated protein 14 (GASA14) from Arabidopsis thaliana (Mouse-ear cress).